A 120-amino-acid polypeptide reads, in one-letter code: uncharacterized protein (120 aa).

Helical transmembrane passes span 26 to 46 (PSTS…PAGM) and 57 to 77 (LLFA…LTLV).

Its subcellular location is the membrane. This is an uncharacterized protein from Saccharomyces cerevisiae (strain ATCC 204508 / S288c) (Baker's yeast).